The primary structure comprises 420 residues: CinA-like protein (420 aa).

This sequence belongs to the CinA family.

The sequence is that of CinA-like protein from Chloroherpeton thalassium (strain ATCC 35110 / GB-78).